A 37-amino-acid polypeptide reads, in one-letter code: MKVKPSVKPICDKCKVIRRHGRVMVICENLRHKQRQG.

This sequence belongs to the bacterial ribosomal protein bL36 family.

This chain is Large ribosomal subunit protein bL36, found in Beutenbergia cavernae (strain ATCC BAA-8 / DSM 12333 / CCUG 43141 / JCM 11478 / NBRC 16432 / NCIMB 13614 / HKI 0122).